A 319-amino-acid polypeptide reads, in one-letter code: GATA transcription factor 18 (319 aa).

The span at 1–15 (MPDAAAAAAAAQDAD) shows a compositional bias: low complexity. A disordered region spans residues 1-74 (MPDAAAAAAA…AAPEPVSALL (74 aa)). Over residues 32 to 60 (NNDDDGDDGTEEDEEEDDDEEGDEEELPP) the composition is skewed to acidic residues. One can recognise a Tify domain in the interval 74–109 (LPGSPNQLTLLFQGEVYVFESVTPEKVQAVLLLLGS). The region spanning 143–185 (RVASLIRFREKRKERNFDKKIRYAVRKEVALRMQRRKGQFAGR) is the CCT domain. Residues 215–242 (CQNCGTSEKMTPAMRRGPAGPRTLCNAC) form a GATA-type zinc finger. Residues 292–319 (ITASHGEVMGDSTPANEAEIGAPKAQSQ) are disordered.

Belongs to the type IV zinc-finger family. Class C subfamily.

It localises to the nucleus. Transcriptional activator that specifically binds 5'-GATA-3' or 5'-GAT-3' motifs within gene promoters. In Oryza sativa subsp. indica (Rice), this protein is GATA transcription factor 18.